The following is a 1196-amino-acid chain: Phosphatidylinositol-3,5-bisphosphate 3-phosphatase MTMR3 (1196 aa).

Serine 8 bears the Phosphoserine mark. One can recognise a Myotubularin phosphatase domain in the interval 155–576 (EHVTSRFKNE…RNLMLWSAVY (422 aa)). Residues asparagine 326, asparagine 351, and isoleucine 352 each contribute to the a 1,2-diacyl-sn-glycero-3-phospho-(1D-myo-inositol-3,5-bisphosphate) site. Residues asparagine 326, asparagine 351, and isoleucine 352 each coordinate a 1,2-diacyl-sn-glycero-3-phospho-(1D-myo-inositol-3-phosphate). Cysteine 413 serves as the catalytic Phosphocysteine intermediate. Serine 414, aspartate 415, glycine 416, tryptophan 417, aspartate 418, arginine 419, lysine 455, and arginine 459 together coordinate a 1,2-diacyl-sn-glycero-3-phospho-(1D-myo-inositol-3,5-bisphosphate). Residues serine 414, aspartate 415, glycine 416, tryptophan 417, aspartate 418, and arginine 419 each contribute to the a 1,2-diacyl-sn-glycero-3-phospho-(1D-myo-inositol-3-phosphate) site. Position 459 (arginine 459) interacts with a 1,2-diacyl-sn-glycero-3-phospho-(1D-myo-inositol-3-phosphate). The disordered stretch occupies residues 587–612 (DDSCAPYPVPGTSPDEPPLSRLPKTR). Pro residues predominate over residues 593–603 (YPVPGTSPDEP). A phosphoserine mark is found at serine 613, serine 633, serine 647, and serine 651. Disordered regions lie at residues 697–719 (TKEESGVEEPTHRGHTEVPEVKE) and 855–900 (ESGP…HRTS). The residue at position 907 (serine 907) is a Phosphoserine. Polar residues predominate over residues 993–1008 (NSHSGRPSTTSSPDQP). Positions 993-1019 (NSHSGRPSTTSSPDQPSRSHLDDDGMP) are disordered. The stretch at 1027–1060 (QRLRQIESGHQQEVETLKKQVQELKSRLESQYLT) forms a coiled coil. Serine 1062 bears the Phosphoserine mark. An FYVE-type zinc finger spans residues 1117-1177 (DHLAAHCYAC…VCKSCYSSLH (61 aa)). Positions 1123, 1126, 1139, 1142, 1147, 1150, 1169, and 1172 each coordinate Zn(2+).

It belongs to the protein-tyrosine phosphatase family. Non-receptor class myotubularin subfamily. In terms of assembly, forms heterodimers with MTMR4 that recruit both CEP55 and PLK1; occurs during early mitosis, regulates the phosphorylation of CEP55 by PLK1 and its recruitment to the midbody where it mediates cell abscission.

It localises to the cytoplasm. It is found in the cytosol. The protein resides in the membrane. It carries out the reaction a 1,2-diacyl-sn-glycero-3-phospho-(1D-myo-inositol-3,5-bisphosphate) + H2O = a 1,2-diacyl-sn-glycero-3-phospho-(1D-myo-inositol-5-phosphate) + phosphate. It catalyses the reaction a 1,2-diacyl-sn-glycero-3-phospho-(1D-myo-inositol-3-phosphate) + H2O = a 1,2-diacyl-sn-glycero-3-phospho-(1D-myo-inositol) + phosphate. The catalysed reaction is 1,2-dihexadecanoyl-sn-glycero-3-phospho-(1D-myo-inositol-3-phosphate) + H2O = 1,2-dihexadecanoyl-sn-glycero-3-phospho-(1D-myo-inositol) + phosphate. The enzyme catalyses 1,2-dioctanoyl-sn-glycero-3-phospho-(1-D-myo-inositol-3-phosphate) + H2O = 1,2-dioctanoyl-sn-glycero-3-phospho-(1D-myo-inositol) + phosphate. It carries out the reaction 1,2-dihexadecanoyl-sn-glycero-3-phospho-(1D-myo-inositol-3,5-phosphate) + H2O = 1,2-dihexadecanoyl-sn-glycero-3-phospho-(1D-myo-inositol-5-phosphate) + phosphate. Its function is as follows. Lipid phosphatase that specifically dephosphorylates the D-3 position of phosphatidylinositol 3-phosphate and phosphatidylinositol 3,5-bisphosphate, generating phosphatidylinositol and phosphatidylinositol 5-phosphate. Decreases the levels of phosphatidylinositol 3-phosphate, a phospholipid found in cell membranes where it acts as key regulator of both cell signaling and intracellular membrane traffic. Could also have a molecular sequestering/adapter activity and regulate biological processes independently of its phosphatase activity. It includes the regulation of midbody abscission during mitotic cytokinesis. In Mus musculus (Mouse), this protein is Phosphatidylinositol-3,5-bisphosphate 3-phosphatase MTMR3.